Here is a 149-residue protein sequence, read N- to C-terminus: Ribosome maturation factor RimP (149 aa).

Belongs to the RimP family.

Its subcellular location is the cytoplasm. Required for maturation of 30S ribosomal subunits. This is Ribosome maturation factor RimP from Neisseria gonorrhoeae (strain NCCP11945).